The following is a 482-amino-acid chain: uncharacterized protein (482 aa).

WD repeat units follow at residues 92 to 133 (DMPN…REPI) and 191 to 230 (GHEH…CLCK).

The protein localises to the cytoplasm. It is found in the nucleus. This is an uncharacterized protein from Schizosaccharomyces pombe (strain 972 / ATCC 24843) (Fission yeast).